A 267-amino-acid polypeptide reads, in one-letter code: Ribosomal RNA small subunit methyltransferase A (267 aa).

Asn18, Leu20, Gly45, Glu66, Asp91, and Asn112 together coordinate S-adenosyl-L-methionine.

The protein belongs to the class I-like SAM-binding methyltransferase superfamily. rRNA adenine N(6)-methyltransferase family. RsmA subfamily.

It is found in the cytoplasm. The catalysed reaction is adenosine(1518)/adenosine(1519) in 16S rRNA + 4 S-adenosyl-L-methionine = N(6)-dimethyladenosine(1518)/N(6)-dimethyladenosine(1519) in 16S rRNA + 4 S-adenosyl-L-homocysteine + 4 H(+). Specifically dimethylates two adjacent adenosines (A1518 and A1519) in the loop of a conserved hairpin near the 3'-end of 16S rRNA in the 30S particle. May play a critical role in biogenesis of 30S subunits. This Shewanella denitrificans (strain OS217 / ATCC BAA-1090 / DSM 15013) protein is Ribosomal RNA small subunit methyltransferase A.